The chain runs to 1003 residues: Pumilio homolog 4 (1003 aa).

The tract at residues 38–65 (QHRNQQSFGRERERDIDVHRSGSAPPTV) is disordered. The span at 46–57 (GRERERDIDVHR) shows a compositional bias: basic and acidic residues. Serine 225 bears the Phosphoserine mark. Positions 285–300 (KNSPNTMLGSTMSSPV) are enriched in polar residues. Residues 285 to 328 (KNSPNTMLGSTMSSPVPRNRTPDSHLVGRSTASGLPPIGTRVGP) are disordered. Residue threonine 305 is modified to Phosphothreonine. Residues 644–984 (AEASLLEGFK…HIVARVEKLI (341 aa)) enclose the PUM-HD domain. 8 Pumilio repeats span residues 664-699 (EIVG…AIFP), 700-735 (EILP…ELAE), 736-771 (QVTG…RMVK), 772-807 (ELDG…FIIS), 808-843 (SFYG…RIIM), 845-880 (EIMD…EIIN), 881-916 (KLAG…VLVN), and 917-958 (EMLG…LILS).

The protein resides in the cytoplasm. Its function is as follows. Sequence-specific RNA-binding protein that regulates translation and mRNA stability by binding the 3'-UTR of target mRNAs. Binds the APUM-binding elements (APBEs) in the 3'-UTR mRNA sequence of CLV1, PNH, WUS and FAS2. The sequence is that of Pumilio homolog 4 (APUM4) from Arabidopsis thaliana (Mouse-ear cress).